The sequence spans 1386 residues: MEVLMAERADLVYHNKAIDGTAMKRLISRLIDHFGMAYTSHILDQVKTLGFRQATATSISLGIDDLLTIPSKGWLVQDAEQQSFILEKHHSYGNVHAVEKLRQSIEIWYATSEYLRQEMNPNFRMTDPSNPVHIMSFSGARGNASQVHQLVGMRGLMSDPQGQMIDLPIQSNLREGLSLTEYIISCYGARKGVVDTAVRTSDAGYLTRRLVEVVQHIVVRRTDCGTIRGISVQPRNGMTERMFFQTLIGRVLADDVYIGLRCIAARNQDIGIGLVNRFITFRAQPVYIRTPFTCRSTSWICQLCYGRSPTHGDLVELGEAVGIIAGQSIGEPGTQLTLRTFHTGGVFTGGTAEHVRAPSNGKIKFNEELVHPTRTRHGHPAFLCSIDLYVTVEGRDIIHNVNIPPKSLILVQNDQYVESEQVIAEIRAGTSTFNFKERVQKHIYSESAGEMHWSTDVYHAPEYTYGNVHLLPKTSHLWILSGGPYRSSIVSSSLHKDQDQTNAHSFSVERRYISDLSMTNGRVRHKLFSSDLSGKRGDRILDYSRPDQIISKGHWNFIYPSILHENSDFLAKRRKNRFIIPFQYDQEGEKELIPHSGISIEIPINGMLRRNSILAYFDDTRYRRSSSGITKYGTVEIDSIVKKEDFIEYRGTKEFSSKYQMKVDRFFFIPEEVHILPGSSSIMVRNNSLIGVDTRITLNIRSRVGGLVRVERKKKNIELKIVSGDIHFPGETDKISRHSGILIPPGTEKKNSKESKTKLKNWIYVQRITPTKKKYFVLVRPVATYEIADGINLATLFPQDLLQERDNVQLRVVNYILYGNGKPIRGISHTSIQLVRTCLVLNWDQEQNGSIEGVRASFVEVRANDLIRDFIRIELCKSAILYTGKRKDIAGSGLIHDNVSDRTNINPVYLKDKIPSFIQHQGTVGTLLNRNKECQSLILLSSSNCFRIGPFNGSKYHNVPKESIKEDPIIPIRDSLGLLGTTVPKIANFFYLSYHVITHNHILLTKYLLRDHLKQAFQVLRYCLMDENRRIYNPDPCSNIIFNAFDLNWRFLHHDYSEETSTILSLGQFVCENVCLFKHGPQIKSGQVIIVHVDSFVIRAAKPYLATPGATVHGHYGEILYGGDTLITFIYEKSRSGDITQGLPKVEQVLEVRSIDSISTNLEKRVEGWNEHITKILGIPWGFLIGAELTIAQSRISLVNKIQKVYRSQGVQIHNKHIEIIVRQITSKVLVSEDGMSNVFSPGELIGLLRAERTGRALEEAICYRAILLGITRASLNTQSFISEASFQETARVLAKAALRGRVDWLKGLKENVVLGAMIPVGTGFKALVHRSRKPNNIHLEIKKNNLFEGQVGDDILFYHRELFGSCGPNNFHDTSEQSFMKFHDS.

The Zn(2+) site is built by C224, C294, C301, and C304.

This sequence belongs to the RNA polymerase beta' chain family. RpoC2 subfamily. In plastids the minimal PEP RNA polymerase catalytic core is composed of four subunits: alpha, beta, beta', and beta''. When a (nuclear-encoded) sigma factor is associated with the core the holoenzyme is formed, which can initiate transcription. The cofactor is Zn(2+).

The protein resides in the plastid. It localises to the chloroplast. It carries out the reaction RNA(n) + a ribonucleoside 5'-triphosphate = RNA(n+1) + diphosphate. Functionally, DNA-dependent RNA polymerase catalyzes the transcription of DNA into RNA using the four ribonucleoside triphosphates as substrates. The polypeptide is DNA-directed RNA polymerase subunit beta'' (Acorus calamus (Sweet flag)).